A 332-amino-acid polypeptide reads, in one-letter code: Putative ketol-acid reductoisomerase 3 (332 aa).

Positions 1–182 (MDKTVLDASL…AIPGGIAVIS (182 aa)) constitute a KARI N-terminal Rossmann domain. The KARI C-terminal knotted domain maps to 183-329 (SFEEEALLDL…KELYKILRRK (147 aa)).

This sequence belongs to the ketol-acid reductoisomerase family.

It carries out the reaction (2R)-2,3-dihydroxy-3-methylbutanoate + NADP(+) = (2S)-2-acetolactate + NADPH + H(+). The enzyme catalyses (2R,3R)-2,3-dihydroxy-3-methylpentanoate + NADP(+) = (S)-2-ethyl-2-hydroxy-3-oxobutanoate + NADPH + H(+). It functions in the pathway amino-acid biosynthesis; L-isoleucine biosynthesis; L-isoleucine from 2-oxobutanoate: step 2/4. Its pathway is amino-acid biosynthesis; L-valine biosynthesis; L-valine from pyruvate: step 2/4. This chain is Putative ketol-acid reductoisomerase 3 (ilvC3), found in Saccharolobus solfataricus (strain ATCC 35092 / DSM 1617 / JCM 11322 / P2) (Sulfolobus solfataricus).